Consider the following 329-residue polypeptide: Ankyrin repeat and SOCS box protein 5 (329 aa).

ANK repeat units follow at residues 69–98 (ADRS…NVNA), 102–131 (DHIT…NVNA), 135–164 (DGVT…KAQL), 167–196 (CLPS…DVDQ), 200–229 (HLGT…DVQK), and 232–261 (YWDT…DINA). The SOCS box domain occupies 278–329 (MVERILLQHEATPSSLCQLCRLCIRNYIGRPRLHLIPQLQLPTLLQNFLQYR).

The protein belongs to the ankyrin SOCS box (ASB) family. As to expression, expressed in endothelial and smooth muscle cells of collateral arteries as well as in satellite cells.

Its pathway is protein modification; protein ubiquitination. May be a substrate-recognition component of a SCF-like ECS (Elongin-Cullin-SOCS-box protein) E3 ubiquitin-protein ligase complex which mediates the ubiquitination and subsequent proteasomal degradation of target proteins. May play a role in the initiation of arteriogenesis. This is Ankyrin repeat and SOCS box protein 5 (ASB5) from Oryctolagus cuniculus (Rabbit).